The sequence spans 120 residues: MANPGLGLLLALGLPFLLARWGRAWGQIQTTSANENSTVLPSSTSSSSDGNLRPEAITAIIVVFSLLAALLLAVGLALLVRKLREKRQTEGTYRPSSEEQVGARVPPTPNLKLPPEERLI.

A signal peptide spans 1–26 (MANPGLGLLLALGLPFLLARWGRAWG). The Extracellular segment spans residues 27 to 59 (QIQTTSANENSTVLPSSTSSSSDGNLRPEAITA). Residue N36 is glycosylated (N-linked (GlcNAc...) asparagine). A helical transmembrane segment spans residues 60 to 80 (IIVVFSLLAALLLAVGLALLV). Residues 81–120 (RKLREKRQTEGTYRPSSEEQVGARVPPTPNLKLPPEERLI) are Cytoplasmic-facing. Residues 84-120 (REKRQTEGTYRPSSEEQVGARVPPTPNLKLPPEERLI) are interaction with EPB41L5. A disordered region spans residues 87–120 (RQTEGTYRPSSEEQVGARVPPTPNLKLPPEERLI). Residues 90–99 (EGTYRPSSEE) show a composition bias toward polar residues. Positions 117–120 (ERLI) match the PDZ-binding motif.

As to quaternary structure, component of a complex composed of CRB3, PALS1 and PATJ. Interacts (via C-terminus) with PALS1 (via PDZ domain). Interacts with PARD6A. Interacts (via intracellular domain) with EPB41L5. Interacts with WDR83. In terms of tissue distribution, preferentially expressed in epithelial tissues. Expressed at high levels in lung, kidney, and colon. Expressed at high levels in retina, colon and mammary glands. Moderately expressed in liver, spleen, pancreas and prostate. Moderately to weakly expressed in the placenta. Weakly expressed in skeletal muscle and small intestine.

Its subcellular location is the apical cell membrane. The protein resides in the cell junction. It is found in the tight junction. Functionally, involved in the establishment of cell polarity in mammalian epithelial cells. Regulates the morphogenesis of tight junctions. Involved in promoting phosphorylation and cytoplasmic retention of transcriptional coactivators YAP1 and WWTR1/TAZ which leads to suppression of TGFB1-dependent transcription of target genes such as CCN2/CTGF, SERPINE1/PAI1, SNAI1/SNAIL1 and SMAD7. The sequence is that of Protein crumbs homolog 3 from Homo sapiens (Human).